The chain runs to 415 residues: Mitochondrial distribution and morphology protein 12 (415 aa).

An SMP-LTD domain is found at 1 to 402 (MSFDINWSEL…WPSWVCFDLN (402 aa)). Residues 53 to 146 (EITIRHIGDP…PPLTDLRRSR (94 aa)) are disordered. Composition is skewed to acidic residues over residues 62 to 75 (PFDD…DDDE) and 92 to 103 (NSSDDDEDDEYD).

Belongs to the MDM12 family. In terms of assembly, component of the ER-mitochondria encounter structure (ERMES) or MDM complex, composed of MMM1, MDM10, MDM12 and MDM34. An MMM1 homodimer associates with one molecule of MDM12 on each side in a pairwise head-to-tail manner, and the SMP-LTD domains of MMM1 and MDM12 generate a continuous hydrophobic tunnel for phospholipid trafficking.

It is found in the mitochondrion outer membrane. The protein localises to the endoplasmic reticulum membrane. In terms of biological role, component of the ERMES/MDM complex, which serves as a molecular tether to connect the endoplasmic reticulum (ER) and mitochondria. Components of this complex are involved in the control of mitochondrial shape and protein biogenesis, and function in nonvesicular lipid trafficking between the ER and mitochondria. MDM12 is required for the interaction of the ER-resident membrane protein MMM1 and the outer mitochondrial membrane-resident beta-barrel protein MDM10. The MDM12-MMM1 subcomplex functions in the major beta-barrel assembly pathway that is responsible for biogenesis of all mitochondrial outer membrane beta-barrel proteins, and acts in a late step after the SAM complex. The MDM10-MDM12-MMM1 subcomplex further acts in the TOM40-specific pathway after the action of the MDM12-MMM1 complex. Essential for establishing and maintaining the structure of mitochondria and maintenance of mtDNA nucleoids. The protein is Mitochondrial distribution and morphology protein 12 of Debaryomyces hansenii (strain ATCC 36239 / CBS 767 / BCRC 21394 / JCM 1990 / NBRC 0083 / IGC 2968) (Yeast).